The chain runs to 392 residues: DNA-directed RNA polymerase subunit Rpo1C (392 aa).

The protein belongs to the RNA polymerase beta' chain family. In terms of assembly, part of the RNA polymerase complex.

The protein localises to the cytoplasm. The catalysed reaction is RNA(n) + a ribonucleoside 5'-triphosphate = RNA(n+1) + diphosphate. Its function is as follows. DNA-dependent RNA polymerase (RNAP) catalyzes the transcription of DNA into RNA using the four ribonucleoside triphosphates as substrates. Forms part of the jaw domain. This chain is DNA-directed RNA polymerase subunit Rpo1C, found in Metallosphaera sedula (strain ATCC 51363 / DSM 5348 / JCM 9185 / NBRC 15509 / TH2).